Consider the following 176-residue polypeptide: HTH-type transcriptional regulator DctR (176 aa).

Residues 109-174 form the HTH luxR-type domain; that stretch reads VPEANVSLSR…ELVRHQHIDY (66 aa). A DNA-binding region (H-T-H motif) is located at residues 133-152; sequence TEDILEKLKISLKTFYCHKH.

Its function is as follows. May act as a transcriptional regulator of dctA. Could be involved in the regulation of the genes coding for the type III secretion system in enterohaemorragic strains. The polypeptide is HTH-type transcriptional regulator DctR (dctR) (Escherichia coli O157:H7).